The chain runs to 478 residues: MAAEDKFESVLSTRYCKNSPLVSILSETNKATLWRQLWIWLGEAEKELGLKQVTQEAIDEMKSQRDNFDWSFIRAEERKLKHDVMAHNHAFGKICPTAAGIIHLGATSCYVQDNADLIAYRDSIDHILKRFATVIDRLAQFSLNNKEVVTVGRTHYQTASLVTVGKRGVLWAQELLMAFQSLAEFRDKMRFRGIKGATGTQDSFLTLFSGDEEKVEALDELVTKKANFANRFLITGQTYSRQQDSQLVFSLSLLGAAAKKVCTDIRVLQAFGELLEPFEKDQIGSSAMPYKKNPMKSERCCALARKLINAPQEALTILADQGLERTLDDSAGRRMLIPDVLLTAEALLTTLQNIFEGLTVQTDNVKKIVEDEIAFLGLEKAMMMLTEEGVDRQQAHAVIRKTALEAKQLQATQKVDIRQTMADPFFDSVRDRIVGLVNNPINFTGRCVSQTENFIAKELKPTISKYLDQSAAKVQLDV.

Substrate-binding positions include 14–15 (RY), 81–83 (KHD), and 107–108 (TS). His155 (proton donor/acceptor) is an active-site residue. Gln237 provides a ligand contact to substrate. Ser285 serves as the catalytic Proton donor/acceptor. The substrate site is built by Arg299, Arg325, Ser330, and Arg334.

Belongs to the lyase 1 family. Adenylosuccinate lyase subfamily. As to quaternary structure, homotetramer. Residues from neighboring subunits contribute catalytic and substrate-binding residues to each active site.

It catalyses the reaction N(6)-(1,2-dicarboxyethyl)-AMP = fumarate + AMP. The catalysed reaction is (2S)-2-[5-amino-1-(5-phospho-beta-D-ribosyl)imidazole-4-carboxamido]succinate = 5-amino-1-(5-phospho-beta-D-ribosyl)imidazole-4-carboxamide + fumarate. Its pathway is purine metabolism; AMP biosynthesis via de novo pathway; AMP from IMP: step 2/2. It participates in purine metabolism; IMP biosynthesis via de novo pathway; 5-amino-1-(5-phospho-D-ribosyl)imidazole-4-carboxamide from 5-amino-1-(5-phospho-D-ribosyl)imidazole-4-carboxylate: step 2/2. Its function is as follows. Catalyzes two non-sequential steps in de novo AMP synthesis: converts (S)-2-(5-amino-1-(5-phospho-D-ribosyl)imidazole-4-carboxamido)succinate (SAICAR) to fumarate plus 5-amino-1-(5-phospho-D-ribosyl)imidazole-4-carboxamide, and thereby also contributes to de novo IMP synthesis, and converts succinyladenosine monophosphate (SAMP) to AMP and fumarate. In Caenorhabditis briggsae, this protein is Adenylosuccinate lyase.